A 306-amino-acid polypeptide reads, in one-letter code: Homeobox protein Hox-C13a (306 aa).

Residues 236–295 constitute a DNA-binding region (homeobox); it reads GRKKRVPYTKIQLKELEKEYAASKFITKDKRRRISATTNLSERQVTIWFQNRRVKEKKFV.

This sequence belongs to the Abd-B homeobox family.

The protein localises to the nucleus. Its function is as follows. Sequence-specific transcription factor which is part of a developmental regulatory system that provides cells with specific positional identities on the anterior-posterior axis. In Danio rerio (Zebrafish), this protein is Homeobox protein Hox-C13a (hoxc13a).